We begin with the raw amino-acid sequence, 428 residues long: GTPase Obg (428 aa).

The 158-residue stretch at 1-158 folds into the Obg domain; it reads MFIDQVKIYV…RDVILELKVL (158 aa). An OBG-type G domain is found at 159–329; sequence ADVGLVGFPS…LLFEVANLIE (171 aa). Residues 165–172, 190–194, 212–215, 282–285, and 310–312 contribute to the GTP site; these read GFPSVGKS, FTTIV, DLPG, NKMD, and SAV. Positions 172 and 192 each coordinate Mg(2+). One can recognise an OCT domain in the interval 350 to 428; the sequence is KFETEGVKFD…ILEYEFEFID (79 aa).

It belongs to the TRAFAC class OBG-HflX-like GTPase superfamily. OBG GTPase family. Monomer. The cofactor is Mg(2+).

Its subcellular location is the cytoplasm. Functionally, an essential GTPase which binds GTP, GDP and possibly (p)ppGpp with moderate affinity, with high nucleotide exchange rates and a fairly low GTP hydrolysis rate. Plays a role in control of the cell cycle, stress response, ribosome biogenesis and in those bacteria that undergo differentiation, in morphogenesis control. In Bacillus anthracis, this protein is GTPase Obg.